A 346-amino-acid chain; its full sequence is MDNEIFDIAIIGAGPAGLFAQFYAGLRELKTALIEATPRIGGQITALYPEKTILDVAGFLGISGRDLVNELKLQTDLVDSKTFLNSEVTNLKKIASHFEIEINHHASFLAKSVIIASGNGSFSPRKIDVPGSSEAEQSGMLTYLLPGLSEVADKDFAVVGGGNTAVDYAVELIDHDCHVSLIHRRDNFRAMESSVTKLKNSRRTNFLTPMKITGLSPKKEKLEIELQSVPDGAVKRVSVDRLIGGFGFTASSRTINQWEEFPEQFNQGFLTNEAQMTSIAGIFAIGDASIYPGKSDLIATAFGEAPTAINQAVNYFDPDRGGPQHSTSLNKKEVFKHDRIKSRYNS.

Residues glutamate 35, glutamine 43, tyrosine 48, valine 88, phenylalanine 122, aspartate 287, and threonine 327 each contribute to the FAD site.

It belongs to the ferredoxin--NADP reductase type 2 family. As to quaternary structure, homodimer. Requires FAD as cofactor.

The enzyme catalyses 2 reduced [2Fe-2S]-[ferredoxin] + NADP(+) + H(+) = 2 oxidized [2Fe-2S]-[ferredoxin] + NADPH. The sequence is that of Ferredoxin--NADP reductase from Oenococcus oeni (strain ATCC BAA-331 / PSU-1).